A 181-amino-acid chain; its full sequence is Ribonuclease HII (181 aa).

Residues 1 to 181 enclose the RNase H type-2 domain; that stretch reads MICGIDEVGR…SLHRKNFKLI (181 aa). Residues Asp-6, Glu-7, and Asp-98 each coordinate a divalent metal cation.

It belongs to the RNase HII family. Mn(2+) is required as a cofactor. Mg(2+) serves as cofactor.

It localises to the cytoplasm. It carries out the reaction Endonucleolytic cleavage to 5'-phosphomonoester.. Endonuclease that specifically degrades the RNA of RNA-DNA hybrids. In Borreliella burgdorferi (strain ATCC 35210 / DSM 4680 / CIP 102532 / B31) (Borrelia burgdorferi), this protein is Ribonuclease HII (rnhB).